Consider the following 207-residue polypeptide: ATP-dependent Clp protease proteolytic subunit (207 aa).

Ser-111 acts as the Nucleophile in catalysis. Residue His-136 is part of the active site.

Belongs to the peptidase S14 family. In terms of assembly, fourteen ClpP subunits assemble into 2 heptameric rings which stack back to back to give a disk-like structure with a central cavity, resembling the structure of eukaryotic proteasomes.

The protein localises to the cytoplasm. The catalysed reaction is Hydrolysis of proteins to small peptides in the presence of ATP and magnesium. alpha-casein is the usual test substrate. In the absence of ATP, only oligopeptides shorter than five residues are hydrolyzed (such as succinyl-Leu-Tyr-|-NHMec, and Leu-Tyr-Leu-|-Tyr-Trp, in which cleavage of the -Tyr-|-Leu- and -Tyr-|-Trp bonds also occurs).. Functionally, cleaves peptides in various proteins in a process that requires ATP hydrolysis. Has a chymotrypsin-like activity. Plays a major role in the degradation of misfolded proteins. The sequence is that of ATP-dependent Clp protease proteolytic subunit from Photorhabdus laumondii subsp. laumondii (strain DSM 15139 / CIP 105565 / TT01) (Photorhabdus luminescens subsp. laumondii).